Consider the following 667-residue polypeptide: Beta-galactosidase LacZ (667 aa).

Arginine 109 contacts substrate. Cysteine 113 lines the Zn(2+) pocket. Asparagine 147 provides a ligand contact to substrate. Glutamate 148 serves as the catalytic Proton donor. Zn(2+) contacts are provided by cysteine 153, cysteine 155, and cysteine 158. Catalysis depends on glutamate 307, which acts as the Nucleophile. Residues tryptophan 315 and 355-358 each bind substrate; that span reads EKFH.

Belongs to the glycosyl hydrolase 42 family.

The enzyme catalyses Hydrolysis of terminal non-reducing beta-D-galactose residues in beta-D-galactosides.. Functionally, catalyzes the hydrolysis of lactose to its constituent monosaccharides glucose and galactose. The protein is Beta-galactosidase LacZ of Lactobacillus acidophilus (strain ATCC 700396 / NCK56 / N2 / NCFM).